We begin with the raw amino-acid sequence, 5289 residues long: Mucin-2 (5289 aa).

The signal sequence occupies residues Met1 to Gly20. Ser21 bears the Phosphoserine mark. His34 provides a ligand contact to Cu(2+). In terms of domain architecture, VWFD 1 spans Asn35 to Glu207. Disulfide bonds link Cys37/Cys169, Cys59/Cys206, Cys67/Cys166, Cys218/Cys255, Cys225/Cys250, Cys237/Cys275, Cys257/Cys263, Cys265/Cys291, Cys295/Cys329, Cys308/Cys321, Cys312/Cys351, Cys331/Cys345, Cys353/Cys375, Cys370/Cys387, Cys373/Cys382, Cys391/Cys528, Cys413/Cys563, Cys435/Cys443, Cys574/Cys619, Cys588/Cys614, Cys601/Cys639, Cys621/Cys627, Cys629/Cys654, Cys661/Cys698, Cys674/Cys688, Cys678/Cys718, Cys700/Cys712, Cys720/Cys742, and Cys740/Cys749. Position 49 (Asp49) interacts with Ca(2+). Positions 146 and 154 each coordinate Cu(+). Residue Glu156 participates in Cu(2+) binding. The N-linked (GlcNAc...) asparagine glycan is linked to Asn163. Ca(2+)-binding residues include Asp171, Asn173, Leu175, and Glu180. Position 277 (His277) interacts with Cu(2+). One can recognise a TIL domain in the interval Cys295–Cys351. His324 contributes to the Cu(2+) binding site. Met326 contributes to the Cu(+) binding site. The VWFD 2 domain occupies Gly389–His564. Asp403 provides a ligand contact to Ca(2+). An N-linked (GlcNAc...) asparagine glycan is attached at Asn423. Ca(2+) is bound by residues Asn530, Asn532, Leu534, Asp537, and Asp538. The N-linked (GlcNAc...) asparagine glycan is linked to Asn670. N-linked (GlcNAc...) asparagine glycosylation is present at Asn770. 21 cysteine pairs are disulfide-bonded: Cys784–Cys820, Cys802–Cys814, Cys822–Cys844, Cys839–Cys856, Cys842–Cys851, Cys860–Cys992, Cys882–Cys1027, Cys891–Cys989, Cys909–Cys916, Cys1037–Cys1080, Cys1051–Cys1075, Cys1062–Cys1102, Cys1082–Cys1090, Cys1092–Cys1117, Cys1108–Cys1137, Cys1121–Cys1163, Cys1145–Cys1187, Cys1167–Cys1181, Cys1189–Cys1213, Cys1208–Cys1238, and Cys1211–Cys1221. The 171-residue stretch at Gly858 to Pro1028 folds into the VWFD 3 domain. Asp872 provides a ligand contact to Ca(2+). N-linked (GlcNAc...) asparagine glycosylation is present at Asn894. The Ca(2+) site is built by Asn994, Asp996, Arg998, Asn1001, and Asp1002. Asn1139 and Asn1154 each carry an N-linked (GlcNAc...) asparagine glycan. N-linked (GlcNAc...) asparagine glycosylation is found at Asn1215, Asn1230, and Asn1246. Residues Thr1266, Thr1267, Thr1269, Thr1270, Thr1272, Thr1275, Thr1276, Thr1281, Thr1282, and Thr1287 are each glycosylated (O-linked (GalNAc) threonine). Ser1291 and Ser1292 each carry an O-linked (GalNAc) serine glycan. Thr1293 is a glycosylation site (O-linked (GalNAc) threonine). Ser1296 carries O-linked (GalNAc) serine glycosylation. The O-linked (GalNAc) threonine glycan is linked to Thr1297. Positions 1310, 1312, 1313, 1316, 1319, 1321, 1322, 1324, 1381, and 1382 each coordinate Ca(2+). Composition is skewed to pro residues over residues Pro1399–Thr1411, Thr1419–Pro1510, Thr1520–Pro1549, Thr1559–Pro1628, and Thr1638–Thr1679. The segment at Pro1399–Phe1773 is disordered. Tandem repeats lie at residues Pro1401–Leu1416, Pro1417–Pro1432, Pro1433–Pro1448, Pro1449–Pro1464, Pro1465–Ser1471, and Pro1472–Ser1478. An approximate repeats region spans residues Pro1401–Leu1747. The stretch at Pro1479–Pro1494 is one 7A repeat. The 7B repeat unit spans residues Pro1495–Leu1517. The 8A repeat unit spans residues Pro1518–Pro1533. The stretch at Pro1534–Leu1556 is one 8B repeat. Residues Pro1557–Pro1572 form a 9A repeat. One copy of the 9B repeat lies at Pro1573–Pro1596. The 10A repeat unit spans residues Pro1597–Pro1612. The 10B repeat unit spans residues Pro1613–Leu1635. Residues Pro1636 to Pro1651 form an 11A repeat. The stretch at Pro1652–Pro1675 is one 11B repeat. 5 consecutive repeat copies span residues Pro1676–Ser1683, Pro1684–Pro1699, Ser1700–Pro1715, Ser1716–Pro1731, and Ser1732–Leu1747. Composition is skewed to low complexity over residues Thr1680–Thr1720 and Thr1741–Thr1759. A compositionally biased stretch (pro residues) spans Pro1760–Phe1770. N-linked (GlcNAc...) asparagine glycans are attached at residues Asn1787 and Asn1820. Composition is skewed to low complexity over residues Met1885–Thr2158, Gly2165–Thr4238, Thr4269–Pro4315, and Ser4329–Ile4430. Disordered regions lie at residues Met1885–Thr4238 and Thr4269–Ile4430. Residues Asn4449, Asn4461, Asn4472, and Asn4483 are each glycosylated (N-linked (GlcNAc...) asparagine). Positions Pro4492–Asp4524 are disordered. Residues Pro4496–Ser4511 are compositionally biased toward low complexity. The span at Lys4512–Cys4522 shows a compositional bias: pro residues. N-linked (GlcNAc...) asparagine glycans are attached at residues Asn4532, Asn4548, and Asn4612. The VWFD 4 domain maps to Cys4589–Pro4772. Cystine bridges form between Cys4591–Cys4732, Cys4613–Cys4771, and Cys4637–Cys4645. Residues Asn4726 and Asn4737 are each glycosylated (N-linked (GlcNAc...) asparagine). Residues His4770–Lys4795 are disordered. 9 N-linked (GlcNAc...) asparagine glycosylation sites follow: Asn4862, Asn4897, Asn4991, Asn4998, Asn5065, Asn5080, Asn5129, Asn5148, and Asn5179. The VWFC 1 domain maps to Cys4927–Lys4996. Residues Gly5034–Glu5101 form the VWFC 2 domain. Cystine bridges form between Cys5185–Cys5232, Cys5199–Cys5246, Cys5208–Cys5262, and Cys5212–Cys5264. The CTCK domain occupies Cys5185 to Gly5270.

In terms of assembly, homomultimer; disulfide-linked. The N- and C-terminus mediate their assembly into higher order structures to form filaments. The CTCK domains of two polypeptides associate in the endoplasmic reticulum to generate intermolecularly disulfide-bonded dimers. These dimers progress to the Golgi apparatus, which is a more acidic environment than the endoplasmic reticulum. Under acidic conditions, the N-termini form non-covalent intermolecular interactions that juxtapose assemblies of the third VWD domain (VWD3) from different CTCK-linked dimers. The VWD3 assemblies then become disulfide bonded to one another to produce long, disulfide-linked polymers that remain highly compact until secretion. Interacts with FCGBP. Interacts with AGR2; disulfide-linked. As to quaternary structure, (Microbial infection) Interacts in vitro with L.monocytogenes internalin proteins InlB, InlC and InlJ; for InlC binding is slightly better at pH 5.5, (the pH of the intestine) than at pH 7.4. Post-translationally, O-glycosylated. O-glycosylation is required for mucin assembly. Goblet cells synthesize two forms of mucin that differ in branched chain O-glycosylation and the site of production in the colon. May undergo proteolytic cleavage in the outer mucus layer of the colon, contributing to the expanded volume and loose nature of this layer which allows for bacterial colonization in contrast to the inner mucus layer which is dense and devoid of bacteria. In terms of processing, at low pH of 6 and under, undergoes autocatalytic cleavage in vitro in the N-terminal region of the fourth VWD domain. It is likely that this also occurs in vivo and is triggered by the low pH of the late secretory pathway. Colon, small intestine, colonic tumors, bronchus, cervix and gall bladder.

It is found in the secreted. Coats the epithelia of the intestines and other mucus membrane-containing organs to provide a protective, lubricating barrier against particles and infectious agents at mucosal surfaces. Major constituent of the colon mucus, which is mainly formed by large polymeric networks of MUC2 secreted by goblet cells that cover the exposed surfaces of intestine. MUC2 networks form hydrogels that guard the underlying epithelium from pathogens and other hazardous matter entering from the outside world, while permitting nutrient absorption and gas exchange. Acts as a divalent copper chaperone that protects intestinal cells from copper toxicity and facilitates nutritional copper unptake into cells. Binds both Cu(2+) and its reduced form, Cu(1+), at two juxtaposed binding sites: Cu(2+), once reduced to Cu(1+) by vitamin C (ascorbate) or other dietary antioxidants, transits to the other binding site. MUC2-bound Cu(1+) is protected from oxidation in aerobic environments, and can be released for nutritional delivery to cells. Mucin gels store antimicrobial molecules that participate in innate immunity. Mucin glycoproteins also house and feed the microbiome, lubricate tissue surfaces, and may facilitate the removal of contaminants and waste products from the body. Goblet cells synthesize two forms of MUC2 mucin that differ in branched chain O-glycosylation and the site of production in the colon: a (1) 'thick' mucus that wraps the microbiota to form fecal pellets is produced in the proximal, ascending colon. 'Thick' mucus transits along the descending colon and is lubricated by a (2) 'thin' MUC2 mucus produced in the distal colon which adheres to the 'thick' mucus. This Homo sapiens (Human) protein is Mucin-2.